The following is a 193-amino-acid chain: Bcl-2-like protein 2 (193 aa).

Ala-2 is subject to N-acetylalanine. The BH4 motif lies at 9-29 (DTRALVADFVGYKLRQKGYVC). A BH1 motif is present at residues 85-104 (ELFQGGPNWGRLVAFFVFGA). The BH2 motif lies at 136 to 151 (DWIHSSGGWAEFTALY).

It belongs to the Bcl-2 family. As to quaternary structure, interacts with HIF3A isoform 2 (via C-terminus domain). Interacts with BOP. As to expression, expressed in almost all myeloid cell lines and in a wide range of tissues, with highest levels in brain, colon, and salivary gland.

The protein resides in the mitochondrion membrane. In terms of biological role, promotes cell survival. Blocks dexamethasone-induced apoptosis. Mediates survival of postmitotic Sertoli cells by suppressing death-promoting activity of BAX. The sequence is that of Bcl-2-like protein 2 (Bcl2l2) from Mus musculus (Mouse).